Reading from the N-terminus, the 1333-residue chain is Xanthine dehydrogenase/oxidase (1333 aa).

The 2Fe-2S ferredoxin-type domain maps to 4–91 (DKLVFFVNGR…HVAVTTVEGI (88 aa)). Residues Cys-43, Cys-48, Cys-51, Cys-73, Cys-113, Cys-116, Cys-148, and Cys-150 each coordinate [2Fe-2S] cluster. Residues 229–414 (FEGERVTWIQ…LSIEIPYSRE (186 aa)) enclose the FAD-binding PCMH-type domain. Residues 257-264 (LVVGNTEI), Phe-337, 347-351 (SVGGN), Asp-360, Leu-404, and Lys-422 contribute to the FAD site. 2 disulfides stabilise this stretch: Cys-509/Cys-1318 and Cys-536/Cys-993. Positions 768 and 799 each coordinate Mo-molybdopterin. Substrate is bound by residues Glu-803 and Arg-881. Mo-molybdopterin is bound at residue Arg-913. Residues Phe-915 and Thr-1011 each contribute to the substrate site. Ala-1080 contributes to the Mo-molybdopterin binding site. Glu-1262 (proton acceptor) is an active-site residue.

It belongs to the xanthine dehydrogenase family. As to quaternary structure, homodimer. Interacts with BTN1A1. [2Fe-2S] cluster is required as a cofactor. Requires FAD as cofactor. The cofactor is Mo-molybdopterin. Subject to partial proteolysis; this alters the enzyme from the dehydrogenase form (D) to the oxidase form (O). Post-translationally, contains sulfhydryl groups that are easily oxidized (in vitro); this alters the enzyme from the dehydrogenase form (D) to the oxidase form (O). Detected in milk (at protein level).

It is found in the cytoplasm. The protein resides in the peroxisome. The protein localises to the secreted. The enzyme catalyses xanthine + NAD(+) + H2O = urate + NADH + H(+). It carries out the reaction hypoxanthine + NAD(+) + H2O = xanthine + NADH + H(+). It catalyses the reaction xanthine + O2 + H2O = urate + H2O2. Can be converted from the dehydrogenase form (D) to the oxidase form (O) irreversibly by proteolysis or reversibly through the oxidation of sulfhydryl groups. Functionally, key enzyme in purine degradation. Catalyzes the oxidation of hypoxanthine to xanthine. Catalyzes the oxidation of xanthine to uric acid. Contributes to the generation of reactive oxygen species. Has also low oxidase activity towards aldehydes (in vitro). In Homo sapiens (Human), this protein is Xanthine dehydrogenase/oxidase (XDH).